The chain runs to 174 residues: Pituitary tumor-transforming gene 1 protein-interacting protein (174 aa).

A signal peptide spans 1–29 (MAPANLGLTPHWVMLLGAVLLLLLSGASA). At 30 to 93 (QEPPRVGCSE…RWGVCWVNFE (64 aa)) the chain is on the extracellular side. Residues 36 to 89 (GCSEYTNRSCEECLRNVSCLWCNENKACMDYPVRKILPPASLCKLSSARWGVCW) form the PSI domain. Residues Asn-42 and Asn-51 are each glycosylated (N-linked (GlcNAc...) asparagine). A helical membrane pass occupies residues 94 to 114 (ALIITMSVLGGSVLLGITVCC). Over 115–174 (CYCCRRKKSRKPDKSDERAMREQEERRVRQEERRAEMKSRHDEIRKKYGLFKEQNPYEKF) the chain is Cytoplasmic. A disordered region spans residues 125–155 (KPDKSDERAMREQEERRVRQEERRAEMKSRH). Residues 126-155 (PDKSDERAMREQEERRVRQEERRAEMKSRH) are compositionally biased toward basic and acidic residues. The stretch at 127-163 (DKSDERAMREQEERRVRQEERRAEMKSRHDEIRKKYG) forms a coiled coil. At Tyr-171 the chain carries Phosphotyrosine.

Interacts with PTTG1.

It localises to the cell membrane. Its subcellular location is the cytoplasm. The protein resides in the nucleus. May facilitate PTTG1 nuclear translocation. The polypeptide is Pituitary tumor-transforming gene 1 protein-interacting protein (Pttg1ip) (Mus musculus (Mouse)).